The sequence spans 232 residues: Large ribosomal subunit protein uL1 (232 aa).

The protein belongs to the universal ribosomal protein uL1 family. Part of the 50S ribosomal subunit.

Binds directly to 23S rRNA. The L1 stalk is quite mobile in the ribosome, and is involved in E site tRNA release. Functionally, protein L1 is also a translational repressor protein, it controls the translation of the L11 operon by binding to its mRNA. This Methylorubrum extorquens (strain CM4 / NCIMB 13688) (Methylobacterium extorquens) protein is Large ribosomal subunit protein uL1.